We begin with the raw amino-acid sequence, 150 residues long: Troponin C, isoform 1 (150 aa).

N-acetylmethionine is present on methionine 1. 4 consecutive EF-hand domains span residues aspartate 7–lysine 42, isoleucine 43–glutamate 78, alanine 83–lysine 118, and leucine 119–glycine 150. Residues aspartate 56, aspartate 58, serine 60, glutamate 62, and glutamate 67 each contribute to the Ca(2+) site. Positions 132, 134, 136, 138, and 143 each coordinate Ca(2+).

It belongs to the troponin C family.

Functionally, troponin is the central regulatory protein of striated muscle contraction. Tn consists of three components: Tn-I which is the inhibitor of actomyosin ATPase, Tn-T which contains the binding site for tropomyosin and Tn-C. The binding of calcium to Tn-C abolishes the inhibitory action of Tn on actin filaments. The chain is Troponin C, isoform 1 from Homarus americanus (American lobster).